Here is a 796-residue protein sequence, read N- to C-terminus: Bud site selection protein 27 (796 aa).

Residues 81–121 (KEEAITFVDDKLKLMEDAIEQFNLKIEEAKKTLDNLNHMED) are a coiled coil. Positions 152–168 (VISSSVTPTTKQPSQSN) are enriched in polar residues. Disordered stretches follow at residues 152–197 (VISS…EENL), 300–344 (LRAQ…QVGF), 421–458 (EGEA…TTRS), 535–624 (EKEP…AKTG), and 752–796 (ATAS…DSKP). Composition is skewed to basic and acidic residues over residues 169 to 197 (SKKE…EENL) and 306 to 318 (SQDH…DVNK). Positions 427–441 (SNRRTRVSRFRKDRA) are enriched in basic residues. Residues 535–550 (EKEPEINSKSEFETPF) are compositionally biased toward basic and acidic residues. Basic residues predominate over residues 551–568 (KKKKLKSLQKPRSSKSMK). Acidic residues predominate over residues 579 to 589 (ISDDDYDDDDD). At serine 580 the chain carries Phosphoserine. Residues 601-610 (NNTDEQDKFP) show a composition bias toward basic and acidic residues.

This sequence belongs to the prefoldin subunit alpha family.

It is found in the cytoplasm. Functionally, involved in gene expression controlled by TOR kinase and nutrient signaling. May also be involved in positioning the proximal bud pole signal. This chain is Bud site selection protein 27 (BUD27), found in Saccharomyces cerevisiae (strain ATCC 204508 / S288c) (Baker's yeast).